The primary structure comprises 432 residues: Adenylosuccinate synthetase (432 aa).

GTP contacts are provided by residues 13–19 and 41–43; these read GDEGKGK and GHT. Asp-14 functions as the Proton acceptor in the catalytic mechanism. Mg(2+) contacts are provided by Asp-14 and Gly-41. IMP contacts are provided by residues 14-17, 39-42, Thr-130, Arg-144, Gln-225, Thr-240, and Arg-304; these read DEGK and NAGH. His-42 (proton donor) is an active-site residue. 300 to 306 lines the substrate pocket; the sequence is ATTGRRR. GTP is bound by residues Arg-306, 332–334, and 415–417; these read KLD and STG.

The protein belongs to the adenylosuccinate synthetase family. Homodimer. It depends on Mg(2+) as a cofactor.

It localises to the cytoplasm. The catalysed reaction is IMP + L-aspartate + GTP = N(6)-(1,2-dicarboxyethyl)-AMP + GDP + phosphate + 2 H(+). It participates in purine metabolism; AMP biosynthesis via de novo pathway; AMP from IMP: step 1/2. Functionally, plays an important role in the de novo pathway of purine nucleotide biosynthesis. Catalyzes the first committed step in the biosynthesis of AMP from IMP. This chain is Adenylosuccinate synthetase, found in Cronobacter sakazakii (strain ATCC BAA-894) (Enterobacter sakazakii).